Here is a 439-residue protein sequence, read N- to C-terminus: Xylose isomerase (439 aa).

Catalysis depends on residues H101 and D104. Residues E232, E268, H271, D296, D307, D309, and D339 each coordinate Mg(2+).

The protein belongs to the xylose isomerase family. As to quaternary structure, homotetramer. Mg(2+) serves as cofactor.

Its subcellular location is the cytoplasm. The catalysed reaction is alpha-D-xylose = alpha-D-xylulofuranose. This chain is Xylose isomerase, found in Histophilus somni (strain 2336) (Haemophilus somnus).